The chain runs to 487 residues: L-asparagine permease 2 (487 aa).

The next 12 helical transmembrane spans lie at 26-46, 50-70, 98-118, 133-153, 163-183, 214-234, 256-276, 290-310, 341-361, 369-389, 414-434, and 440-460; these read QLQMIALGGAIGTGLFLGAGG, SAGPGLFLVYGICGIFVFLIL, VAFVAGWMYFLNWAMTGIVDT, PIPQWTLALIALLVVLSMNLI, FWASLIKVIALVTFLIVGTVF, IVLVTSGVVFAYAAIELVGIA, IACFYVGSTVLLALLLPYTAY, IGIDAAGSVMNLVVLTAALSS, TGVPYGGILLTAGIGLLGIIL, AFEIVLHIAATGVIAAWATIV, SPFSGYLTLAFLAGVLILMYF, and PWMIAATVIGVPALIGGWYLV.

It belongs to the amino acid-polyamine-organocation (APC) superfamily. Amino acid transporter (AAT) (TC 2.A.3.1) family.

The protein resides in the cell membrane. In terms of biological role, dual function in both nitrogen assimilation and in protection against acid stress during infection. Involved in asparagine uptake. The chain is L-asparagine permease 2 (ansP2) from Mycobacterium bovis (strain ATCC BAA-935 / AF2122/97).